The chain runs to 233 residues: Delta-actitoxin-Amc1a (233 aa).

Residues 1 to 18 form the signal peptide; it reads MKRIFIVALLFATCLVNA. 2 consecutive propeptides follow at residues 19–29 and 30–33; these read KPSINDADIKR and EPEP. Position 39 is a hydroxyproline (proline 39). 2 cysteine pairs are disulfide-bonded: cysteine 40-cysteine 51 and cysteine 43-cysteine 58. 2 consecutive propeptides follow at residues 61-63 and 64-67; these read RKR and EPEP. Residue proline 73 is modified to Hydroxyproline. Cystine bridges form between cysteine 74–cysteine 85 and cysteine 77–cysteine 92. 2 propeptides span residues 95 to 97 and 98 to 101; these read RKR and EPEP. Position 107 is a hydroxyproline (proline 107). Disulfide bonds link cysteine 108–cysteine 119 and cysteine 111–cysteine 126. Propeptides lie at residues 129–131 and 132–135; these read RKR and EPEP. The residue at position 141 (proline 141) is a Hydroxyproline. 2 disulfide bridges follow: cysteine 142–cysteine 153 and cysteine 145–cysteine 160. 2 consecutive propeptides follow at residues 163 to 165 and 166 to 169; these read RKR and EPEP. At proline 175 the chain carries Hydroxyproline. 2 disulfides stabilise this stretch: cysteine 176-cysteine 187 and cysteine 179-cysteine 194. Propeptides lie at residues 197–199 and 200–203; these read RKR and EPEP. Proline 209 bears the Hydroxyproline mark. Disulfide bonds link cysteine 210/cysteine 221 and cysteine 213/cysteine 228. Positions 231 to 233 are excised as a propeptide; the sequence is RKR.

This sequence belongs to the sea anemone BBH family. Post-translationally, each Am I peptide may contain 2 disulfide bonds. In terms of processing, the precursor protein seems to be processed in the following sequence: release of the signal peptide and of the propeptide, production of six identical 34-residue peptides by cleavage between Arg and Glu, release of four N-terminal and three C-terminal residues from each peptide and hydroxylation of each Pro in position 6 of the resulting 27-residue peptides.

It is found in the secreted. Its subcellular location is the nematocyst. Its function is as follows. May inhibit voltage-gated sodium channels (Nav). The polypeptide is Delta-actitoxin-Amc1a (Antheopsis maculata (Sea anemone)).